The chain runs to 138 residues: Phospholipase A2 group V (138 aa).

An N-terminal signal peptide occupies residues methionine 1–glycine 20. 6 disulfide bridges follow: cysteine 46/cysteine 137, cysteine 48/cysteine 64, cysteine 63/cysteine 117, cysteine 70/cysteine 110, cysteine 79/cysteine 103, and cysteine 97/cysteine 108. Residues tyrosine 47, glycine 49, and glycine 51 each coordinate Ca(2+). The active site involves histidine 67. Aspartate 68 is a binding site for Ca(2+). The active site involves aspartate 111.

This sequence belongs to the phospholipase A2 family. It depends on Ca(2+) as a cofactor. This enzyme lacks one of the seven disulfide bonds found in similar PLA2 proteins. Heart, placenta and less abundantly, in lung. Detected in the outer and inner plexiform layers of the retina (at protein level). Expressed in monocytes and macrophages.

The protein resides in the secreted. Its subcellular location is the cell membrane. The protein localises to the cytoplasmic vesicle. It is found in the phagosome. It localises to the recycling endosome. The protein resides in the golgi apparatus. Its subcellular location is the cis-Golgi network. The protein localises to the trans-Golgi network. The enzyme catalyses a 1,2-diacyl-sn-glycero-3-phosphocholine + H2O = a 1-acyl-sn-glycero-3-phosphocholine + a fatty acid + H(+). It catalyses the reaction 1-hexadecanoyl-2-(9Z-octadecenoyl)-sn-glycero-3-phosphocholine + H2O = 1-hexadecanoyl-sn-glycero-3-phosphocholine + (9Z)-octadecenoate + H(+). The catalysed reaction is 1-hexadecanoyl-2-(5Z,8Z,11Z,14Z-eicosatetraenoyl)-sn-glycero-3-phosphocholine + H2O = 1-hexadecanoyl-sn-glycero-3-phosphocholine + (5Z,8Z,11Z,14Z)-eicosatetraenoate + H(+). It carries out the reaction 1-hexadecanoyl-2-(9Z,12Z-octadecadienoyl)-sn-glycero-3-phosphoethanolamine + H2O = 1-hexadecanoyl-sn-glycero-3-phosphoethanolamine + (9Z,12Z)-octadecadienoate + H(+). The enzyme catalyses 1-hexadecanoyl-2-(5Z,8Z,11Z,14Z-eicosatetraenoyl)-sn-glycero-3-phosphoethanolamine + H2O = 1-hexadecanoyl-sn-glycero-3-phosphoethanolamine + (5Z,8Z,11Z,14Z)-eicosatetraenoate + H(+). It catalyses the reaction 1-octadecanoyl-2-(5Z,8Z,11Z,14Z-eicosatetraenoyl)-sn-glycero-3-phospho-(1D-myo-inositol) + H2O = 1-octadecanoyl-sn-glycero-3-phospho-(1D-myo-inositol) + (5Z,8Z,11Z,14Z)-eicosatetraenoate + H(+). The catalysed reaction is 1-hexadecanoyl-2-(9Z-octadecenoyl)-sn-glycero-3-phosphoglycerol + H2O = 1-hexadecanoyl-sn-glycero-3-phosphoglycerol + (9Z)-octadecenoate + H(+). It carries out the reaction N-hexadecanoyl-1,2-di-(9Z-octadecenoyl)-sn-glycero-3-phosphoethanolamine + H2O = N-hexadecanoyl-1-(9Z-octadecenoyl)-sn-glycero-3-phosphoethanolamine + (9Z)-octadecenoate + H(+). The enzyme catalyses 1'-[1,2-di-(9Z-octadecenoyl)-sn-glycero-3-phospho]-3'-[1-(9Z-octadecenoyl)-sn-glycero-3-phospho]-glycerol + H2O = 1',3'-bis-[1-(9Z-octadecenoyl)-sn-glycero-3-phospho]-glycerol + (9Z)-octadecenoate + H(+). It catalyses the reaction 1',3'-bis[1,2-di-(9Z-octadecenoyl)-sn-glycero-3-phospho]-glycerol + H2O = 1'-[1,2-di-(9Z-octadecenoyl)-sn-glycero-3-phospho]-3'-[1-(9Z-octadecenoyl)-sn-glycero-3-phospho]-glycerol + (9Z)-octadecenoate + H(+). The protein operates within lipid metabolism; phospholipid metabolism. It participates in lipid metabolism; leukotriene B4 biosynthesis. It functions in the pathway lipid metabolism; leukotriene C4 biosynthesis. Activated by cardiolipin. In terms of biological role, secretory calcium-dependent phospholipase A2 that primarily targets extracellular phospholipids. Hydrolyzes the ester bond of the fatty acyl group attached at sn-2 position of phospholipids (phospholipase A2 activity), preferentially releasing fatty acyl groups with a low degree of unsaturation such as oleoyl (C18:1) and linoleoyl (C18:2) groups. Hydrolyzes low-density lipoprotein (LDL) phospholipids releasing unsaturated fatty acids that drive macrophage polarization toward an M2 phenotype. May act in an autocrine and paracrine manner. Contributes to lipid remodeling of cellular membranes at different subcellular locations and generation of lipid mediators involved in pathogen clearance. Cleaves sn-2 fatty acyl chains of cardiolipin, a major component of the inner membrane of mitochondria and bacterial membranes. Promotes phagocytosis of bacteria in macrophages through production of lysophosphatidylethanolamines. Displays bactericidal activity against Gram-positive bacteria by directly hydrolyzing phospholipids of the bacterial membrane. Promotes phagocytosis and killing of ingested fungi likely through controlling phagosome-lysosome fusion and phagosome maturation. Plays a role in biosynthesis of cysteinyl leukotrienes (CysLTs) in myeloid cells. In eosinophils, triggers perinuclear arachidonate release and LTC4 synthesis in a PLA2G4A-independent way. In neutrophils, amplifies CysLTs biosynthesis initiated by PLA2G4A. Promotes immune complex clearance in macrophages via stimulating synthesis of CysLTs, which act through CYSLTR1 to trigger phagocytosis. May regulate antigen processing in antigen-presenting cells. In pulmonary macrophages regulates IL33 production required for activation of group 2 innate lymphoid cells. May play a role in the biosynthesis of N-acyl ethanolamines that regulate energy metabolism. Hydrolyzes N-acyl phosphatidylethanolamines to N-acyl lysophosphatidylethanolamines, which are further cleaved by a lysophospholipase D to release N-acyl ethanolamines. The chain is Phospholipase A2 group V (PLA2G5) from Homo sapiens (Human).